We begin with the raw amino-acid sequence, 149 residues long: Probable flagellum biosynthesis repressor protein FlbT (149 aa).

Belongs to the FlbT family.

Its function is as follows. Has a post-transcriptional repressor function in flagellum biogenesis. Associates with the 5'-UTR of fljK mRNA and promotes its degradation. This chain is Probable flagellum biosynthesis repressor protein FlbT, found in Sinorhizobium medicae (strain WSM419) (Ensifer medicae).